The chain runs to 574 residues: NADH-ubiquinone oxidoreductase chain 5 (574 aa).

The next 16 membrane-spanning stretches (helical) occupy residues 10–30 (VASK…LYMV), 50–70 (MMMT…VVMI), 87–107 (FINR…MLIF), 111–131 (LIIL…LVIY), 141–161 (GMIT…AIAW), 181–203 (YQAL…SSWL), 211–231 (TPVS…FLLI), 240–260 (VWWF…MAGL), 280–300 (LGMM…FHMV), 301–321 (THAM…HSHM), 340–360 (TSCL…SGFY), 381–401 (LILF…MCVV), 423–443 (MLLL…ILPL), 458–478 (TLML…TTNM), 489–509 (IINY…QFMM), and 554–574 (TPMN…LVAI).

This sequence belongs to the complex I subunit 5 family.

Its subcellular location is the mitochondrion inner membrane. It catalyses the reaction a ubiquinone + NADH + 5 H(+)(in) = a ubiquinol + NAD(+) + 4 H(+)(out). Core subunit of the mitochondrial membrane respiratory chain NADH dehydrogenase (Complex I) that is believed to belong to the minimal assembly required for catalysis. Complex I functions in the transfer of electrons from NADH to the respiratory chain. The immediate electron acceptor for the enzyme is believed to be ubiquinone. This chain is NADH-ubiquinone oxidoreductase chain 5 (ND5), found in Lumbricus terrestris (Common earthworm).